The primary structure comprises 29 residues: Cyclotide vibi-D (29 aa).

The cyclopeptide (Gly-Asn) cross-link spans 1–29; that stretch reads GLPVCGETCFGGRCNTPGCTCSYPICTRN. Disulfide bonds link C5/C19, C9/C21, and C14/C26.

Post-translationally, this is a cyclic peptide.

Functionally, probably participates in a plant defense mechanism. Has moderate levels of cytotoxic activity, active against a human lymphoma cell line with an IC(50) of &gt;30 uM. This is Cyclotide vibi-D from Viola biflora (Yellow wood violet).